The sequence spans 805 residues: Cation channel sperm-associated auxiliary subunit delta (805 aa).

Positions 1-16 are cleaved as a signal peptide; that stretch reads MLVLMLAAAVATMVRA. The Extracellular portion of the chain corresponds to 17–723; the sequence is HTLCRVHTVR…ALPVTKFQPL (707 aa). Intrachain disulfides connect C20–C366, C56–C143, C142–C149, C384–C493, C507–C701, C522–C569, and C621–C651. N227, N419, N469, N535, and N627 each carry an N-linked (GlcNAc...) asparagine glycan. A helical transmembrane segment spans residues 724 to 745; that stretch reads LTILLMVTTTLLTAWLAYAIPK. At 746–805 the chain is on the cytoplasmic side; that stretch reads QLRSEKGQRLLGFCYQILQLCLGVCFCTWLRGKLRQWLRPRRVKDQNRGKVRVAQKHPET.

It belongs to the CATSPERD family. In terms of assembly, component of the CatSper complex or CatSpermasome composed of the core pore-forming members CATSPER1, CATSPER2, CATSPER3 and CATSPER4 as well as auxiliary members CATSPERB, CATSPERG2, CATSPERD, CATSPERE, CATSPERZ, C2CD6/CATSPERT, SLCO6C1, TMEM249, TMEM262 and EFCAB9. HSPA1 may be an additional auxiliary complex member. The core complex members CATSPER1, CATSPER2, CATSPER3 and CATSPER4 form a heterotetrameric channel. The auxiliary CATSPERB, CATSPERG2, CATSPERD and CATSPERE subunits form a pavilion-like structure over the pore which stabilizes the complex through interactions with CATSPER4, CATSPER3, CATSPER1 and CATSPER2 respectively. SLCO6C1 interacts with CATSPERE and TMEM262/CATSPERH interacts with CATSPERB, further stabilizing the complex. C2CD6/CATSPERT interacts at least with CATSPERD and is required for targeting the CatSper complex in the flagellar membrane. In terms of tissue distribution, testis-specific.

It is found in the cell projection. Its subcellular location is the cilium. It localises to the flagellum membrane. Auxiliary component of the CatSper complex, a complex involved in sperm cell hyperactivation. Sperm cell hyperactivation is needed for sperm motility which is essential late in the preparation of sperm for fertilization. Required for CATSPER1 stability before intraflagellar transport and/or incorporation of the CatSper complex channel into the flagellar membrane. This Mus musculus (Mouse) protein is Cation channel sperm-associated auxiliary subunit delta.